The chain runs to 640 residues: 1-deoxy-D-xylulose-5-phosphate synthase (640 aa).

Residues His79 and 120 to 122 (AHS) each bind thiamine diphosphate. Residue Asp151 coordinates Mg(2+). Thiamine diphosphate-binding positions include 152–153 (GA), Asn180, Tyr289, and Glu371. Asn180 contributes to the Mg(2+) binding site.

Belongs to the transketolase family. DXPS subfamily. As to quaternary structure, homodimer. It depends on Mg(2+) as a cofactor. Requires thiamine diphosphate as cofactor.

It carries out the reaction D-glyceraldehyde 3-phosphate + pyruvate + H(+) = 1-deoxy-D-xylulose 5-phosphate + CO2. Its pathway is metabolic intermediate biosynthesis; 1-deoxy-D-xylulose 5-phosphate biosynthesis; 1-deoxy-D-xylulose 5-phosphate from D-glyceraldehyde 3-phosphate and pyruvate: step 1/1. Functionally, catalyzes the acyloin condensation reaction between C atoms 2 and 3 of pyruvate and glyceraldehyde 3-phosphate to yield 1-deoxy-D-xylulose-5-phosphate (DXP). The polypeptide is 1-deoxy-D-xylulose-5-phosphate synthase (Novosphingobium aromaticivorans (strain ATCC 700278 / DSM 12444 / CCUG 56034 / CIP 105152 / NBRC 16084 / F199)).